A 462-amino-acid polypeptide reads, in one-letter code: Dipeptidyl peptidase 1 (462 aa).

The N-terminal stretch at 1–24 (MGPWTHSLRAVLLLVLLGVCTVRS) is a signal peptide. N-linked (GlcNAc...) asparagine glycosylation is found at N29 and N53. Cystine bridges form between C30/C118, C54/C136, C254/C297, C290/C330, and C320/C336. A propeptide spanning residues 135 to 230 (ACFVGKKVES…DEIQQQILNL (96 aa)) is cleaved from the precursor. Residue C257 is part of the active site. Residue N275 is glycosylated (N-linked (GlcNAc...) asparagine). The chloride site is built by F301 and Y303. Residue Y346 coordinates chloride. Residues H404 and N426 contribute to the active site.

This sequence belongs to the peptidase C1 family. Tetramer of heterotrimers consisting of exclusion domain, heavy- and light chains. It depends on chloride as a cofactor. In terms of tissue distribution, broadly distributed, but higher levels found in lung, liver, kidney and spleen. Lower levels found in testis and brain.

The protein resides in the lysosome. The catalysed reaction is Release of an N-terminal dipeptide, Xaa-Yaa-|-Zaa-, except when Xaa is Arg or Lys, or Yaa or Zaa is Pro.. Functionally, thiol protease. Has dipeptidylpeptidase activity. Active against a broad range of dipeptide substrates composed of both polar and hydrophobic amino acids. Proline cannot occupy the P1 position and arginine cannot occupy the P2 position of the substrate. Can act as both an exopeptidase and endopeptidase. Activates serine proteases such as elastase, cathepsin G and granzymes A and B. This Mus musculus (Mouse) protein is Dipeptidyl peptidase 1 (Ctsc).